The following is a 354-amino-acid chain: Chaperone protein dnaJ 49 (354 aa).

The 65-residue stretch at 99-163 (DYYAILGLEK…NSRRQFDQVG (65 aa)) folds into the J domain. A helical transmembrane segment spans residues 237-257 (CLTIIQILPFFLLLLLAYLPF).

It belongs to the DnaJ family. C/III subfamily.

The protein localises to the membrane. Its function is as follows. Plays a continuous role in plant development probably in the structural organization of compartments. The sequence is that of Chaperone protein dnaJ 49 (ATJ49) from Arabidopsis thaliana (Mouse-ear cress).